The following is an 89-amino-acid chain: FXYD domain-containing ion transport regulator 4 (89 aa).

Positions 1–20 (MERVTLALLLLAGLTALEAN) are cleaved as a signal peptide. At 21 to 38 (DPFANKDDPFYYDWKNLQ) the chain is on the extracellular side. The helical transmembrane segment at 39–59 (LSGLICGGLLAIAGIAAVLSG) threads the bilayer. Over 60 to 89 (KCKCKSSQKQHSPVPEKAIPLITPGSATTC) the chain is Cytoplasmic.

It belongs to the FXYD family. In terms of assembly, regulatory subunit of the sodium/potassium-transporting ATPase which is composed of a catalytic alpha subunit, a non-catalytic beta subunit and a regulatory subunit. The regulatory subunit, a member of the FXYD protein family, modulates the enzymatic activity in a tissue- and isoform-specific way by changing affinities of the Na+/K+-ATPase toward Na(+), K(+) or ATP.

It is found in the cell membrane. Its subcellular location is the basolateral cell membrane. Functionally, associates with and regulates the activity of the sodium/potassium-transporting ATPase (NKA) which catalyzes the hydrolysis of ATP coupled with the exchange of Na(+) and K(+) ions across the plasma membrane. Increases the apparent affinity of the transporter for Na(+) and increases NKA activity. The polypeptide is FXYD domain-containing ion transport regulator 4 (FXYD4) (Homo sapiens (Human)).